The sequence spans 364 residues: MGALCSSETYMLDKETYKKQVEHNKMIEQDLDKDRKLKILKLLILGPGESGKSTTIKQIKIIHDEGYSVEEKLIRRHGIFMNILEGIEEIHLAVGRENKSYKNPLSFDHIHEVRMFTENFKKADEADKILGAEVINAIQKYVKDETVAMMLRDKTVYNIDDSTIYFLDNFSRIIQKDYLPTEEDILKSRVPTSGVIQYKIMLKNFNFKIFDVGGQRAQRRKWLHVFDDVHAVLFITSLSEYDQVLREDATVNRMKESLNLFEKICNGRYFINTAMILFLNKIDLFEIKIKHTNITVALTSYKGPQERDSALDYIRKRFVSLNKNKKRSIYEHVTCATDTEQIQVVIDSVIDVVIQHTMQKVGIQ.

Glycine 2 carries the N-myristoyl glycine lipid modification. A lipid anchor (S-palmitoyl cysteine) is attached at cysteine 5. Residues 38–364 (KILKLLILGP…QHTMQKVGIQ (327 aa)) enclose the G-alpha domain. The segment at 41–54 (KLLILGPGESGKST) is G1 motif. Residues 46–53 (GPGESGKS), 186–192 (LKSRVPT), 211–215 (DVGGQ), 280–283 (NKID), and alanine 336 contribute to the GTP site. Positions 53 and 192 each coordinate Mg(2+). The tract at residues 184 to 192 (DILKSRVPT) is G2 motif. The tract at residues 207–216 (FKIFDVGGQR) is G3 motif. The G4 motif stretch occupies residues 276–283 (ILFLNKID). A G5 motif region spans residues 334–339 (TCATDT).

This sequence belongs to the G-alpha family. G proteins are composed of 3 units; alpha, beta and gamma. The alpha chain contains the guanine nucleotide binding site.

Functionally, guanine nucleotide-binding proteins (G proteins) are involved as modulators or transducers in various transmembrane signaling systems. This Caenorhabditis briggsae protein is Guanine nucleotide-binding protein alpha-8 subunit (gpa-8).